We begin with the raw amino-acid sequence, 179 residues long: Large ribosomal subunit protein uL6 (179 aa).

Belongs to the universal ribosomal protein uL6 family. Part of the 50S ribosomal subunit.

Functionally, this protein binds to the 23S rRNA, and is important in its secondary structure. It is located near the subunit interface in the base of the L7/L12 stalk, and near the tRNA binding site of the peptidyltransferase center. The chain is Large ribosomal subunit protein uL6 from Metamycoplasma arthritidis (strain 158L3-1) (Mycoplasma arthritidis).